The sequence spans 97 residues: uncharacterized protein (97 aa).

Disordered regions lie at residues 1–20 (MTEG…IASD) and 52–97 (VPAA…GRRA).

This is an uncharacterized protein from Paracoccus pantotrophus (Thiosphaera pantotropha).